A 354-amino-acid chain; its full sequence is Glutamine synthetase (354 aa).

The GS beta-grasp domain maps to Ile-22–Gly-101. The GS catalytic domain occupies His-108–Lys-354.

It belongs to the glutamine synthetase family. Homooctamer.

Its subcellular location is the cytoplasm. The enzyme catalyses L-glutamate + NH4(+) + ATP = L-glutamine + ADP + phosphate + H(+). The chain is Glutamine synthetase (glnA) from Agaricus bisporus (White button mushroom).